The primary structure comprises 355 residues: uncharacterized protein (355 aa).

The N-terminal 49 residues, 1–49, are a transit peptide targeting the chloroplast; that stretch reads MPMTVVSGRFSTALLPTCFSLSRLHSVKYAAQRRVVFVSRSAHASSASV.

It belongs to the methyltransferase superfamily.

It is found in the plastid. Its subcellular location is the chloroplast. The protein localises to the plastoglobule. This is an uncharacterized protein from Arabidopsis thaliana (Mouse-ear cress).